A 522-amino-acid chain; its full sequence is Monogalactosyldiacylglycerol synthase, chloroplastic (522 aa).

The N-terminal 98 residues, 1–98, are a transit peptide targeting the chloroplast; it reads MSHPSTVTSE…RIPLGFSSIG (98 aa).

It belongs to the glycosyltransferase 28 family. In terms of assembly, homodimer. Zn(2+) serves as cofactor.

It localises to the plastid. It is found in the chloroplast inner membrane. The enzyme catalyses a 1,2-diacyl-sn-glycerol + UDP-alpha-D-galactose = a 1,2-diacyl-3-O-(beta-D-galactosyl)-sn-glycerol + UDP + H(+). Its activity is regulated as follows. Inhibited by ortho-phenanthroline and UDP (competitive inhibitor relatively to UDP-Gal only) and inactivated by citraconic anhydride, tert-butoxycarbonyl-L-methionine hydrosuccinimidyl ester (SLR) and N-ethylmaleimide (NEM). Functionally, involved in the synthesis of the major structural component of photosynthetic membranes. The 1,2-diacylglycerol substrate preference is 18:2/18:2 &gt; 18:0/18:1 &gt; 18:1/18:1 &gt; 18:1/16:0 &gt; 16:0/18:2 &gt; 18:3/18:3 &gt; 16:0/18:1 &gt; 16:0/16:0 &gt; 18:0/18:0. The polypeptide is Monogalactosyldiacylglycerol synthase, chloroplastic (MGD A) (Spinacia oleracea (Spinach)).